The chain runs to 765 residues: Spastin (765 aa).

The tract at residues 1 to 94 (MVRTKNQSSS…TSGYGPRGGT (94 aa)) is disordered. Residues 1–107 (MVRTKNQSSS…KQNLYVVSFP (107 aa)) lie on the Cytoplasmic side of the membrane. A required for localization to punctate cytoplasmic foci region spans residues 1-195 (MVRTKNQSSS…ALLPLEMATN (195 aa)). Residues 8–19 (SSSSSASSSTKS) are compositionally biased toward low complexity. Over residues 48–58 (SSKLSSNRQRA) the composition is skewed to polar residues. A compositionally biased stretch (low complexity) spans 59–72 (TITTTTTSTTPGSS). The segment at residues 108 to 128 (IIFLFNVLRSLIYQLFCIFRY) is an intramembrane region (helical). Topologically, residues 129–765 (LYCASTKVIY…WSQDYGDITI (637 aa)) are cytoplasmic. The segment at 193–765 (ATNRGGSGGY…WSQDYGDITI (573 aa)) is sufficient for interaction with microtubules and microtubule severing. The region spanning 218–293 (HRRAFEYISK…SMARDRLHFL (76 aa)) is the MIT domain. The interval 329 to 462 (QTNSKAAAVE…GSGSGASTPM (134 aa)) is disordered. The segment covering 355–364 (SGTGSSAGTS) has biased composition (low complexity). Composition is skewed to polar residues over residues 389 to 407 (NKSQ…STSV) and 428 to 444 (QFSS…RTPI). A required for interaction with microtubules region spans residues 446–462 (NNAASGSGSGSGASTPM). ATP is bound at residue 530 to 537 (GPPGNGKT).

The protein belongs to the AAA ATPase family. Spastin subfamily. As to quaternary structure, homohexamer. The homohexamer is stabilized by ATP-binding. The homohexamer may adopt a ring conformation through which microtubules pass prior to being severed. Interacts with microtubules. Interacts with atl; may be involved in microtubule dynamics.

The protein localises to the membrane. The protein resides in the cytoplasm. Its subcellular location is the cytoskeleton. It is found in the microtubule organizing center. It localises to the centrosome. The protein localises to the chromosome. The protein resides in the lipid droplet. It carries out the reaction n ATP + n H2O + a microtubule = n ADP + n phosphate + (n+1) alpha/beta tubulin heterodimers.. In terms of biological role, ATP-dependent microtubule severing protein. Stimulates microtubule minus-end depolymerization and poleward microtubule flux in the mitotic spindle. Regulates microtubule stability in the neuromuscular junction synapse. Involved in lipid metabolism by regulating the size and distribution of lipid droplets. Involved in axon regeneration by regulating microtubule severing. The chain is Spastin from Drosophila mojavensis (Fruit fly).